The sequence spans 541 residues: MFQDKGWVLLTLITLVSPSWAAYKLQERYSWNQLDFAFPNARLKEQALASGDYIPQNGLPVGVEHFGNRLFVTVPRWRDGIPATLTYINMDRSLTGSPELIPYPDWRSNTAGDCANSITTAYRIKVDECGRLWVLDTGTVGIGNTTTNPCPYAVNVFDLTTDTRIRRYELPAVDTNPNTFIANIAVDIGKNCDDAYAYFADELGYGLIAYSWEQDKSWRFSAHSYFFPDPLRGDFNVAGINFQWGEEGIFGMSLSPIRSDGYRTLYFSPLASHRQFAVSTRILRDETRTEDSYHDFVALDERGPNSHTTSRVMSDDGIELFNLIDQNAVGCWHSSMPYSPQFHGIVDRDDVGLVFPADVKIDENKNVWVLSDRMPVFLLSDLDYSDTNFRIYTAPLATLIDNTVCDLRNNAYGPPNTVSIPKQTVLPVGPPLYTKQYRPVLPQKPQTSWASSPPPPSRTYLPANSGNVVSSISVSTNTVGPAGVEVPKAYIFNQHNGINYETSGPHLFPTLQPAQPAGQDGGLKTYVNARQSGWWHHQHQG.

The N-terminal stretch at Met-1–Ala-21 is a signal peptide. An N-linked (GlcNAc...) asparagine glycan is attached at Asn-144.

This sequence belongs to the major royal jelly protein family.

It localises to the secreted. Functionally, controls the pigmentation pattern of the adult cuticle and larval mouth parts. This is Protein yellow (y) from Drosophila yakuba (Fruit fly).